The following is a 90-amino-acid chain: U7-theraphotoxin-Hhn1b (90 aa).

The signal sequence occupies residues 1–19 (MKTAIFTVVLALAVFAVLS). A propeptide spanning residues 20–50 (FGWEANEKALSEEFTELIHEKEAASETEARE) is cleaved from the precursor. 3 cysteine pairs are disulfide-bonded: Cys-51–Cys-65, Cys-58–Cys-70, and Cys-64–Cys-81.

It belongs to the neurotoxin 10 (Hwtx-1) family. 13 (Hntx-13) subfamily. Expressed by the venom gland.

Its subcellular location is the secreted. Functionally, ion channel inhibitor. This chain is U7-theraphotoxin-Hhn1b, found in Cyriopagopus hainanus (Chinese bird spider).